A 442-amino-acid chain; its full sequence is MKMPKNNVYTVSQLNGEVRQLLEGELGRVWLNAEISNFSSPSSGHWYLTLKDHFAQIRCAMFKGKNRTVTFRPANGQQVLVKGSISVYEPRGDYQLIIESMLPAGDGMLAQQYEALKMKLAAEGLFATDTKRPLPTNINKIGVITSATGAALKDVLHVLARRDPSIEVVVYPTQVQGDNAAKLICRAIELANARQEVDVLLLTRGGGSLEDLWCFNSEDLAHCIYNSALPVVSAVGHEVDTSISDYVADVRAPTPSAGAELLSKDADDKAHKLIAGLSRLKQSWQHYQLKTVQKATALENRLQRQDPKRRLEQFEQSFDEMQLRLNAALNSRIHKLALKQQNLSHRLSQQSPEHRLTLEAKRLDYLTTRLNEGIKDKLHDVELSLKNSAHQLQTVSPLATLSRGYSITQDESGKVLLNAKDAKTGDLLTTRLLEGELRSKVV.

It belongs to the XseA family. Heterooligomer composed of large and small subunits.

The protein resides in the cytoplasm. It catalyses the reaction Exonucleolytic cleavage in either 5'- to 3'- or 3'- to 5'-direction to yield nucleoside 5'-phosphates.. In terms of biological role, bidirectionally degrades single-stranded DNA into large acid-insoluble oligonucleotides, which are then degraded further into small acid-soluble oligonucleotides. This is Exodeoxyribonuclease 7 large subunit from Shewanella woodyi (strain ATCC 51908 / MS32).